Consider the following 161-residue polypeptide: RNA pyrophosphohydrolase (161 aa).

The Nudix hydrolase domain maps to G6–V149. The Nudix box motif lies at G38–G59.

The protein belongs to the Nudix hydrolase family. RppH subfamily. The cofactor is a divalent metal cation.

Accelerates the degradation of transcripts by removing pyrophosphate from the 5'-end of triphosphorylated RNA, leading to a more labile monophosphorylated state that can stimulate subsequent ribonuclease cleavage. This chain is RNA pyrophosphohydrolase, found in Acinetobacter baumannii (strain AB307-0294).